An 859-amino-acid chain; its full sequence is ATP-dependent DNA helicase PIF1 (859 aa).

Residues 1–45 (MPKWIRSTLNHIIPRRPFICSFNSFLLLKNVSHAKLSFSMSSRGF) constitute a mitochondrion transit peptide. Phosphoserine is present on residues S70 and S72. Polar residues predominate over residues 142-157 (NSFDQSSQKKSRSTGF). A disordered region spans residues 142–183 (NSFDQSSQKKSRSTGFKNPLRPALKKESSFDELQNSSISQER). The residue at position 169 (S169) is a Phosphoserine. The span at 172 to 182 (DELQNSSISQE) shows a compositional bias: polar residues. 258–265 (GSAGTGKS) is a binding site for ATP. S584 is modified (phosphoserine). Residues 727–746 (QAYVALSRAVSREGLQVLNF) mediate DNA binding. Residues 782–859 (KRKLDYAPGP…GQDTEDHILE (78 aa)) form a disordered region. Residues 800 to 809 (KSNSPAPISA) show a composition bias toward low complexity. Positions 844–859 (VSDEPRGQDTEDHILE) are enriched in basic and acidic residues.

It belongs to the helicase family. PIF1 subfamily. In terms of assembly, monomer in solution. DNA binding induces dimerization. Associates with mitochondrial and telomeric DNA. Binding to mtDNA is non-specific and the protein seems to coat the entire mtDNA molecule. Binds to the telomerase RNA TLC1. Interacts with the mitochondrial single-strand DNA-binding protein RIM1. Mg(2+) is required as a cofactor. Mn(2+) serves as cofactor. In terms of processing, phosphorylated. Undergoes RAD53-dependent phosphorylation in response to loss of mtDNA.

It is found in the nucleus. The protein localises to the nucleolus. The protein resides in the mitochondrion inner membrane. The catalysed reaction is Couples ATP hydrolysis with the unwinding of duplex DNA at the replication fork by translocating in the 5'-3' direction. This creates two antiparallel DNA single strands (ssDNA). The leading ssDNA polymer is the template for DNA polymerase III holoenzyme which synthesizes a continuous strand.. It catalyses the reaction ATP + H2O = ADP + phosphate + H(+). DNA-dependent ATPase and 5'-3' DNA helicase required for the maintenance of both mitochondrial and nuclear genome stability. Efficiently unwinds G-quadruplex (G4) DNA structures and forked RNA-DNA hybrids. Appears to move along DNA in single nucleotide or base pair steps, powered by hydrolysis of 1 molecule of ATP. Processes at an unwinding rate of about 75 bp/s. Resolves G4 structures, preventing replication pausing and double-strand breaks (DSBs) at G4 motifs. Involved in the maintenance of telomeric DNA. Inhibits telomere elongation, de novo telomere formation and telomere addition to DSBs via catalytic inhibition of telomerase. Reduces the processivity of telomerase by displacing active telomerase from DNA ends. Releases telomerase by unwinding the short telomerase RNA/telomeric DNA hybrid that is the intermediate in the telomerase reaction. Involved in the maintenance of ribosomal (rDNA). Required for efficient fork arrest at the replication fork barrier within rDNA. Involved in the maintenance of mitochondrial (mtDNA). Required to maintain mtDNA under conditions that introduce dsDNA breaks in mtDNA, either preventing or repairing dsDNA breaks. May inhibit replication progression to allow time for repair. May have a general role in chromosomal replication by affecting Okazaki fragment maturation. May have a role in conjunction with DNA2 helicase/nuclease in 5'-flap extension during Okazaki fragment processing. The polypeptide is ATP-dependent DNA helicase PIF1 (Saccharomyces cerevisiae (strain YJM789) (Baker's yeast)).